The sequence spans 238 residues: Snake venom metalloproteinase HF-1 (238 aa).

A Peptidase M12B domain is found at 17-221 (RYIQLVVVAD…YNPQCILNKP (205 aa)). Asp106 is a Ca(2+) binding site. Cystine bridges form between Cys130-Cys216 and Cys174-Cys181. His158 contributes to the Zn(2+) binding site. Glu159 is an active-site residue. His162 and His168 together coordinate Zn(2+). The Ca(2+) site is built by Cys216 and Asn219.

As to quaternary structure, monomer. Requires Zn(2+) as cofactor. In terms of tissue distribution, expressed by the venom gland.

It localises to the secreted. Its activity is regulated as follows. Inhibited by EDTA and EGTA. Inhibited by serum and antihemorrhagic factors Da2-I and Da2-II from D.albiventris. Not inhibited by PMSF or SBT-I. Its function is as follows. Snake venom zinc metalloprotease that is weakly hemorrhagic and has Aalpha, Bbeta fibrinogenolytic activities. Cleaves the Aalpha chain of fibrinogen first, followed by the Bbeta chain and shows no effect on the gamma chain. Has caseinolytic activity. Induces dose-dependent edema. This is Snake venom metalloproteinase HF-1 from Bothrops marajoensis (Marajo lancehead).